We begin with the raw amino-acid sequence, 2430 residues long: Spatacsin (2430 aa).

A phosphoserine mark is found at Ser1942 and Ser1943.

In terms of assembly, interacts with AP5Z1, AP5B1, AP5S1 and ZFYVE26. Ubiquitously expressed at low level. Expressed in embryonic and adult cortical projection neurons.

The protein resides in the cytoplasm. The protein localises to the cytosol. It localises to the nucleus. It is found in the cell projection. Its subcellular location is the axon. The protein resides in the dendrite. The protein localises to the synapse. Functionally, may play a role in neurite plasticity by maintaining cytoskeleton stability and regulating synaptic vesicle transport. This is Spatacsin (Spg11) from Mus musculus (Mouse).